We begin with the raw amino-acid sequence, 89 residues long: Late cornified envelope protein 3A (89 aa).

Composition is skewed to low complexity over residues 1-10 and 17-46; these read MSCQQNQQQC and PAKS…SERS. Disordered regions lie at residues 1 to 46 and 62 to 89; these read MSCQ…SERS and CQSS…AGCC.

The protein belongs to the LCE family. In terms of assembly, interacts with CYSRT1; the interaction is direct. As to expression, skin-specific. Expression was readily detected in adult trunk skin, adult arm skin, fetal skin, penal skin, vulva, esophagus and tongue. Not expressed in the cervix, rectum, lung, colon, or placenta.

Its function is as follows. A structural component of the cornified envelope of the stratum corneum involved in innate cutaneous host defense. Possesses defensin-like antimicrobial activity against a broad spectrum of Gram-positive and Gram-negative bacteria, both aerobic and anaerobic species. Upon inflammation, may regulate skin barrier repair by shaping cutaneous microbiota composition and immune response to bacterial antigens. This is Late cornified envelope protein 3A from Homo sapiens (Human).